The sequence spans 75 residues: Small ribosomal subunit protein bS18 (75 aa).

Belongs to the bacterial ribosomal protein bS18 family. In terms of assembly, part of the 30S ribosomal subunit. Forms a tight heterodimer with protein bS6.

Binds as a heterodimer with protein bS6 to the central domain of the 16S rRNA, where it helps stabilize the platform of the 30S subunit. The chain is Small ribosomal subunit protein bS18 from Ruegeria sp. (strain TM1040) (Silicibacter sp.).